Reading from the N-terminus, the 64-residue chain is uncharacterized protein (64 aa).

The segment at 1–64 (MMITRGWEGW…LDPAISRSSS (64 aa)) is disordered. A compositionally biased stretch (gly residues) spans 16 to 28 (RGAGTGTGLGGPG).

This is an uncharacterized protein from Homo sapiens (Human).